Here is a 482-residue protein sequence, read N- to C-terminus: tRNA sulfurtransferase (482 aa).

The THUMP domain occupies 61-165 (AAIVAELTRI…DERLILVTAR (105 aa)). ATP is bound by residues 183–184 (LI), Lys265, Gly287, and Gln296. Cys344 and Cys456 are disulfide-bonded. In terms of domain architecture, Rhodanese spans 404 to 482 (FSHNDVILDI…GFKNVKVYRP (79 aa)). The Cysteine persulfide intermediate role is filled by Cys456.

This sequence belongs to the ThiI family.

It is found in the cytoplasm. It carries out the reaction [ThiI sulfur-carrier protein]-S-sulfanyl-L-cysteine + a uridine in tRNA + 2 reduced [2Fe-2S]-[ferredoxin] + ATP + H(+) = [ThiI sulfur-carrier protein]-L-cysteine + a 4-thiouridine in tRNA + 2 oxidized [2Fe-2S]-[ferredoxin] + AMP + diphosphate. It catalyses the reaction [ThiS sulfur-carrier protein]-C-terminal Gly-Gly-AMP + S-sulfanyl-L-cysteinyl-[cysteine desulfurase] + AH2 = [ThiS sulfur-carrier protein]-C-terminal-Gly-aminoethanethioate + L-cysteinyl-[cysteine desulfurase] + A + AMP + 2 H(+). Its pathway is cofactor biosynthesis; thiamine diphosphate biosynthesis. Functionally, catalyzes the ATP-dependent transfer of a sulfur to tRNA to produce 4-thiouridine in position 8 of tRNAs, which functions as a near-UV photosensor. Also catalyzes the transfer of sulfur to the sulfur carrier protein ThiS, forming ThiS-thiocarboxylate. This is a step in the synthesis of thiazole, in the thiamine biosynthesis pathway. The sulfur is donated as persulfide by IscS. This is tRNA sulfurtransferase from Erwinia tasmaniensis (strain DSM 17950 / CFBP 7177 / CIP 109463 / NCPPB 4357 / Et1/99).